Reading from the N-terminus, the 222-residue chain is Eukaryotic translation initiation factor 3 subunit K (222 aa).

Residues 46–208 (YDLEANLAVL…KIKTKNITEK (163 aa)) enclose the PCI domain.

This sequence belongs to the eIF-3 subunit K family. As to quaternary structure, component of the eukaryotic translation initiation factor 3 (eIF-3) complex. The eIF-3 complex interacts with pix.

The protein localises to the cytoplasm. Functionally, component of the eukaryotic translation initiation factor 3 (eIF-3) complex, which is involved in protein synthesis of a specialized repertoire of mRNAs and, together with other initiation factors, stimulates binding of mRNA and methionyl-tRNAi to the 40S ribosome. The eIF-3 complex specifically targets and initiates translation of a subset of mRNAs involved in cell proliferation. This Drosophila mojavensis (Fruit fly) protein is Eukaryotic translation initiation factor 3 subunit K.